A 506-amino-acid polypeptide reads, in one-letter code: Maturase K (506 aa).

It belongs to the intron maturase 2 family. MatK subfamily.

Its subcellular location is the plastid. It is found in the chloroplast. In terms of biological role, usually encoded in the trnK tRNA gene intron. Probably assists in splicing its own and other chloroplast group II introns. The chain is Maturase K from Trifolium subterraneum (Subterranean clover).